The primary structure comprises 387 residues: Diels-Alderase ORF3 (387 aa).

This sequence belongs to the Diels-Alderase family.

The protein operates within secondary metabolite biosynthesis. Its function is as follows. Diels-Alderase; part of the gene cluster that mediates the biosynthesis of a tyrosine-derived cytochalasan acting as a fungal signal recognized by resistant rice plants and leads to avirulence in Pi33 resistant rice cultivars. The first step in the pathway is catalyzed by the hybrid PKS-NRPS ACE1, assisted by the enoyl reductase RAP1, that are responsible for fusion of the tyrosine precursor and the polyketide backbone. The polyketide synthase module (PKS) of ACE1 is responsible for the synthesis of the polyketide backbone and the downstream nonribosomal peptide synthetase (NRPS) amidates the carboxyl end of the polyketide with the tyrosine precursor. Because ACE1 lacks a designated enoylreductase (ER) domain, the required activity is provided the enoyl reductase RAP1. Reduction by the hydrolyase ORFZ, followed by dehydration and intra-molecular Diels-Alder cyclization by the Diels-Alderase ORF3 then yield the required isoindolone-fused macrocycle. A number of oxidative steps catalyzed by the tailoring enzymes identified within the cluster, including cytochrome P450 monooxygenases CYP1 to CYP4, the FAD-linked oxidoreductase OXR2 and the short-chain dehydrogenase/reductase OXR1, are further required to afford the final cytochalasans that confer avirulence and which have still to be identified. The monooxygenase CYP1 has been shown to be a site-selective C-18 hydroxylase whereas the function of CYP3 is the site-selective epoxidation of the C-6/C-7 olefin that is present in some intermediate compounds. Finally, SYN2 and RAP2 are not required for avirulence in Pi33 resistant rice cultivars. This Pyricularia oryzae (strain 70-15 / ATCC MYA-4617 / FGSC 8958) (Rice blast fungus) protein is Diels-Alderase ORF3.